The sequence spans 168 residues: Translationally-controlled tumor protein homolog (168 aa).

The region spanning 1 to 168 (MLLYKDVISG…FKDGLVSEKF (168 aa)) is the TCTP domain. The residue at position 78 (serine 78) is a Phosphoserine.

It belongs to the TCTP family.

Its subcellular location is the cytoplasm. Functionally, involved in calcium binding and microtubule stabilization. May be a guanine nucleotide-free chaperone (GFC). This is Translationally-controlled tumor protein homolog (p23fy) from Schizosaccharomyces pombe (strain 972 / ATCC 24843) (Fission yeast).